The chain runs to 137 residues: MAEFELEVLQPERIFFKDKVEMIVVRAIDGEIGIMAGHEPIVTPIGIGKLRIKKGGKWREAAIAGGILEVNQNKVVILSDAVEWPEEIDRQRALAAKERAEKKLQQKLPPDEFERYQAALYRAINRLRMIEERRNGD.

It belongs to the ATPase epsilon chain family. As to quaternary structure, F-type ATPases have 2 components, CF(1) - the catalytic core - and CF(0) - the membrane proton channel. CF(1) has five subunits: alpha(3), beta(3), gamma(1), delta(1), epsilon(1). CF(0) has three main subunits: a, b and c.

The protein localises to the cell membrane. Functionally, produces ATP from ADP in the presence of a proton gradient across the membrane. This chain is ATP synthase epsilon chain, found in Caldicellulosiruptor saccharolyticus (strain ATCC 43494 / DSM 8903 / Tp8T 6331).